A 280-amino-acid polypeptide reads, in one-letter code: 4-diphosphocytidyl-2-C-methyl-D-erythritol kinase (280 aa).

Lys8 is a catalytic residue. 91 to 101 serves as a coordination point for ATP; the sequence is PVSAGLAGGSS. Asp133 is a catalytic residue.

It belongs to the GHMP kinase family. IspE subfamily.

The catalysed reaction is 4-CDP-2-C-methyl-D-erythritol + ATP = 4-CDP-2-C-methyl-D-erythritol 2-phosphate + ADP + H(+). It functions in the pathway isoprenoid biosynthesis; isopentenyl diphosphate biosynthesis via DXP pathway; isopentenyl diphosphate from 1-deoxy-D-xylulose 5-phosphate: step 3/6. Functionally, catalyzes the phosphorylation of the position 2 hydroxy group of 4-diphosphocytidyl-2C-methyl-D-erythritol. The protein is 4-diphosphocytidyl-2-C-methyl-D-erythritol kinase of Clostridium novyi (strain NT).